The primary structure comprises 98 residues: Aspartyl/glutamyl-tRNA(Asn/Gln) amidotransferase subunit C (98 aa).

Belongs to the GatC family. Heterotrimer of A, B and C subunits.

It carries out the reaction L-glutamyl-tRNA(Gln) + L-glutamine + ATP + H2O = L-glutaminyl-tRNA(Gln) + L-glutamate + ADP + phosphate + H(+). The catalysed reaction is L-aspartyl-tRNA(Asn) + L-glutamine + ATP + H2O = L-asparaginyl-tRNA(Asn) + L-glutamate + ADP + phosphate + 2 H(+). Its function is as follows. Allows the formation of correctly charged Asn-tRNA(Asn) or Gln-tRNA(Gln) through the transamidation of misacylated Asp-tRNA(Asn) or Glu-tRNA(Gln) in organisms which lack either or both of asparaginyl-tRNA or glutaminyl-tRNA synthetases. The reaction takes place in the presence of glutamine and ATP through an activated phospho-Asp-tRNA(Asn) or phospho-Glu-tRNA(Gln). The sequence is that of Aspartyl/glutamyl-tRNA(Asn/Gln) amidotransferase subunit C from Kocuria rhizophila (strain ATCC 9341 / DSM 348 / NBRC 103217 / DC2201).